We begin with the raw amino-acid sequence, 498 residues long: NAD(P)H-quinone oxidoreductase chain 4, chloroplastic (498 aa).

A run of 14 helical transmembrane segments spans residues 4 to 24 (FPWL…IFLF), 31 to 51 (VIKW…SYVF), 76 to 96 (FYWS…TGFI), 113 to 130 (LFYF…GTFS), 134 to 154 (ILLF…LLSM), 167 to 187 (FILY…GMSF), 208 to 228 (ALEI…SPII), 242 to 262 (HYST…YGLV), 272 to 292 (AHSI…IYAA), 305 to 325 (IAYS…SISD), 330 to 350 (GAIL…FLAG), 386 to 406 (LALP…GIIT), 411 to 431 (LLIT…LTPI), and 463 to 483 (FISI…DFIF).

The protein belongs to the complex I subunit 4 family.

The protein resides in the plastid. The protein localises to the chloroplast thylakoid membrane. The enzyme catalyses a plastoquinone + NADH + (n+1) H(+)(in) = a plastoquinol + NAD(+) + n H(+)(out). It carries out the reaction a plastoquinone + NADPH + (n+1) H(+)(in) = a plastoquinol + NADP(+) + n H(+)(out). The polypeptide is NAD(P)H-quinone oxidoreductase chain 4, chloroplastic (Glycine max (Soybean)).